Reading from the N-terminus, the 253-residue chain is Proteasome subunit alpha (253 aa).

The interval 229 to 253 (ADESQSYIDDIEDAADDSDDDDDEE) is disordered. Positions 237 to 253 (DDIEDAADDSDDDDDEE) are enriched in acidic residues.

The protein belongs to the peptidase T1A family. In terms of assembly, the 20S proteasome core is composed of 14 alpha and 14 beta subunits that assemble into four stacked heptameric rings, resulting in a barrel-shaped structure. The two inner rings, each composed of seven catalytic beta subunits, are sandwiched by two outer rings, each composed of seven alpha subunits. The catalytic chamber with the active sites is on the inside of the barrel. Has a gated structure, the ends of the cylinder being occluded by the N-termini of the alpha-subunits. Is capped at one or both ends by the proteasome regulatory ATPase, PAN.

It is found in the cytoplasm. With respect to regulation, the formation of the proteasomal ATPase PAN-20S proteasome complex, via the docking of the C-termini of PAN into the intersubunit pockets in the alpha-rings, triggers opening of the gate for substrate entry. Interconversion between the open-gate and close-gate conformations leads to a dynamic regulation of the 20S proteasome proteolysis activity. Functionally, component of the proteasome core, a large protease complex with broad specificity involved in protein degradation. In Halobacterium salinarum (strain ATCC 29341 / DSM 671 / R1), this protein is Proteasome subunit alpha.